The sequence spans 692 residues: Serine/threonine-protein phosphatase PP-Z1 (692 aa).

2 disordered regions span residues 1 to 309 (MGNS…DIEN) and 321 to 357 (ENVN…PKKF). Residue Gly-2 is the site of N-myristoyl glycine attachment. 3 stretches are compositionally biased toward low complexity: residues 32 to 41 (SHSVKSAKSN), 49 to 69 (SLPS…STPS), and 91 to 122 (SSSH…RRSS). Ser-49 bears the Phosphoserine mark. Residues 170–179 (LTDDDNDDKD) are compositionally biased toward acidic residues. The residue at position 171 (Thr-171) is a Phosphothreonine. Over residues 190 to 204 (RSSNSRPSSIRSGSV) the composition is skewed to low complexity. Over residues 207–216 (RKSDVTHEEP) the composition is skewed to basic and acidic residues. Phosphoserine is present on residues Ser-209 and Ser-222. 2 stretches are compositionally biased toward polar residues: residues 217–229 (NNGS…QENY) and 251–267 (FGSD…NSPG). Position 261 is a phosphothreonine (Thr-261). Ser-265 carries the phosphoserine modification. Low complexity predominate over residues 280–289 (TSNSTSSLNH). Positions 291–303 (SSRDIYPSKHISN) are enriched in basic and acidic residues. Residues 321-331 (ENVNDKNNNIT) show a composition bias toward polar residues. Mn(2+)-binding residues include Asp-419, His-421, Asp-447, and Asn-479. Catalysis depends on His-480, which acts as the Proton donor. Residues His-528 and His-603 each coordinate Mn(2+). Residues 672 to 692 (LANQQQQMMETSITNDNESQQ) are disordered. The span at 673–692 (ANQQQQMMETSITNDNESQQ) shows a compositional bias: polar residues. Ser-690 carries the post-translational modification Phosphoserine.

This sequence belongs to the PPP phosphatase family. PP-Z subfamily. As to quaternary structure, interacts with SIS2 and VHS3, which regulate its activity. Mn(2+) is required as a cofactor.

The catalysed reaction is O-phospho-L-seryl-[protein] + H2O = L-seryl-[protein] + phosphate. The enzyme catalyses O-phospho-L-threonyl-[protein] + H2O = L-threonyl-[protein] + phosphate. Its activity is regulated as follows. Inhibited by the regulatory subunits VHS3 and SIS2. Functionally, essential for the maintenance of cell size and integrity in response to osmotic stress. This Saccharomyces cerevisiae (strain ATCC 204508 / S288c) (Baker's yeast) protein is Serine/threonine-protein phosphatase PP-Z1 (PPZ1).